A 591-amino-acid polypeptide reads, in one-letter code: MIVLPNKVRIFINDRMKKDIYLGISNFGFENDIDEILGIAHLLEHLLISFDSTIFLANASTSRSYMSFWCKSINSATESDAIRTLVSWFFSNGKLKDNFSLSSIRFHIKELENEYYFRNEVFHCMDILTFLSGGDLYNGGRIDMIDNLNIVRDMLVNRMQRISGSNIVIFVKRLGPGTLDFFNQTFGSLPACPEIIPSSIPVSTNGKIVMTPSPFYTVMVKINPTLDNILGILYLYETYHLIDYETIGNQLYLTVSFIDETEYESFLRGEAILQISQCQRINMNYSDDYMMNIYLNFPWLSHDLYDYITRINDDSKSILISLTNEIYTSIINRDIIVIYPNFSKAMCNTRDTQQHPIVVLDATNDGLIKKPYRSIPLMKRLTSNEIFIRYGDASLMDMITLSLSKQDISLKRNAEGIRVKHSFSADDIQAIMESDSFLKYSRSKPAAMYQYIFLSFFASGNSIDDILTNRDSTLEFSKKTKSKILFGRNARYDVTTKSSFVCGIVRGKLLDKTSLVEMMWDLKKKGLIYSMEFTNLLSKNTFYLFTFTIYTDEVYDYLNTNKLFSAKCLVISTKGDVENFSSLKKDVVIRV.

Residue His41 participates in Zn(2+) binding. Residue Glu44 is part of the active site. Positions 45 and 112 each coordinate Zn(2+).

The protein belongs to the peptidase M44 family. Requires Zn(2+) as cofactor. Post-translationally, undergoes proteolytic processing during the course of infection. May be cleaved into 46 kDa and 22 kDa products (Potential).

Its subcellular location is the virion. In terms of biological role, probably involved in maturation of some viral proteins by processing them preferentially at Ala-Gly-|-Ser/Thr/Lys motifs. Does not seem to be responsible for the cleavage of major core proteins. In Variola virus (isolate Human/India/Ind3/1967) (VARV), this protein is Metalloendopeptidase OPG085 (OPG085).